A 583-amino-acid chain; its full sequence is Chromosomal replication initiator protein DnaA (583 aa).

The tract at residues 1–91 is domain I, interacts with DnaA modulators; the sequence is MSNSNFSIEE…KHVLKTRLDL (91 aa). Positions 91-241 are domain II; that stretch reads LSVSLAITST…SFNDGLDGES (151 aa). The tract at residues 151-239 is disordered; the sequence is KAEQRDGASQ…SSSFNDGLDG (89 aa). Residues 172 to 182 are compositionally biased toward basic and acidic residues; it reads EAARRREHDAD. Residues 242-458 are domain III, AAA+ region; the sequence is LLNKNYTFEN…GALIRVTAYC (217 aa). 4 residues coordinate ATP: glycine 286, glycine 288, lysine 289, and threonine 290. The domain IV, binds dsDNA stretch occupies residues 459 to 583; sequence ALSHEPLTVE…TQKIKSHARD (125 aa).

The protein belongs to the DnaA family. As to quaternary structure, oligomerizes as a right-handed, spiral filament on DNA at oriC.

The protein localises to the cytoplasm. In terms of biological role, plays an essential role in the initiation and regulation of chromosomal replication. ATP-DnaA binds to the origin of replication (oriC) to initiate formation of the DNA replication initiation complex once per cell cycle. Binds the DnaA box (a 9 base pair repeat at the origin) and separates the double-stranded (ds)DNA. Forms a right-handed helical filament on oriC DNA; dsDNA binds to the exterior of the filament while single-stranded (ss)DNA is stabiized in the filament's interior. The ATP-DnaA-oriC complex binds and stabilizes one strand of the AT-rich DNA unwinding element (DUE), permitting loading of DNA polymerase. After initiation quickly degrades to an ADP-DnaA complex that is not apt for DNA replication. Binds acidic phospholipids. In Corynebacterium jeikeium (strain K411), this protein is Chromosomal replication initiator protein DnaA.